A 285-amino-acid chain; its full sequence is MASKDSDVRCVKCQSLKPTTPLTGQDRCARCVAINELKPWISTCNINPCYDGDLSESNETIEMMDINSCREDTPSDAESETRFMPFVAHSKQPKHTSKNPTKGEIQYFPVEKCKDIHRVENQSSIDEEGKQCWICRDGESLPEARYCNCYGDLQYCHEECLKTWISMSGEKKCKFCQTPYKVNRQLSLKRGLPGYWDRDDRFVFIAGFIGMGTILAGWIASFFYLLVVLCGKYFTYKDVMIVVGGLAIIQVVGLMFSLFMYFQIGNLLRQYINYMTETNIDPLRT.

The Cytoplasmic portion of the chain corresponds to Met-1–Arg-201. The RING-CH-type zinc-finger motif lies at Ser-124–Asn-183. Zn(2+) is bound by residues Cys-132, Cys-135, Cys-147, Cys-149, His-157, Cys-160, Cys-173, and Cys-176. The chain crosses the membrane as a helical span at residues Phe-202 to Phe-222. Residues Phe-223–Asp-238 lie on the Extracellular side of the membrane. The helical transmembrane segment at Val-239 to Phe-259 threads the bilayer. Over Met-260–Thr-285 the chain is Cytoplasmic.

The protein localises to the membrane. It carries out the reaction S-ubiquitinyl-[E2 ubiquitin-conjugating enzyme]-L-cysteine + [acceptor protein]-L-lysine = [E2 ubiquitin-conjugating enzyme]-L-cysteine + N(6)-ubiquitinyl-[acceptor protein]-L-lysine.. Its pathway is protein modification; protein ubiquitination. Its function is as follows. Controls the expression of later classes of genes and also of the IE genes (Potential). E3 ubiquitin-protein ligase. E3 ubiquitin ligases accept ubiquitin from an E2 ubiquitin-conjugating enzyme in the form of a thioester and then directly transfer the ubiquitin to targeted substrates. The sequence is that of Probable E3 ubiquitin-protein ligase IE1 (IE1) from Bovine herpesvirus 4 (strain DN-599) (BoHV-4).